A 364-amino-acid chain; its full sequence is Myeloid cell surface antigen CD33 (364 aa).

A signal peptide spans 1–17 (MPLLLLLPLLWAGALAM). At 18–259 (DPNFWLQVQE…KQETRAGVVH (242 aa)) the chain is on the extracellular side. The region spanning 19–135 (PNFWLQVQES…KYSYKSPQLS (117 aa)) is the Ig-like V-type domain. 3 disulfide bridges follow: C36–C169, C41–C101, and C163–C212. Residues N100 and N113 are each glycosylated (N-linked (GlcNAc...) asparagine). R119 contacts N-acetylneuraminate. The 84-residue stretch at 145 to 228 (PKILIPGTLE…AGVTTERTIQ (84 aa)) folds into the Ig-like C2-type domain. E154 serves as a coordination point for D-galactose. N-linked (GlcNAc...) asparagine glycosylation is found at N160, N209, and N230. Residues 260–282 (GAIGGAGVTALLALCLCLIFFIV) traverse the membrane as a helical segment. The Cytoplasmic portion of the chain corresponds to 283 to 364 (KTHRRKAART…STEYSEVRTQ (82 aa)). The interval 290-364 (ARTAVGRNDT…STEYSEVRTQ (75 aa)) is disordered. Short sequence motifs (ITIM motif) lie at residues 338–343 (LHYASL) and 356–361 (TEYSEV). Phosphotyrosine; by LCK occurs at positions 340 and 358.

It belongs to the immunoglobulin superfamily. SIGLEC (sialic acid binding Ig-like lectin) family. In terms of assembly, homodimer; disulfide-linked. Interacts with PTPN6/SHP-1 and PTPN11/SHP-2 upon phosphorylation. Interacts with C1QA (via C-terminus); this interaction activates CD33 inhibitory motifs. Glycosylated. Glycosylation at Asn-100 is critical for regulating ligand recognition. In terms of processing, phosphorylation of Tyr-340 is involved in binding to PTPN6 and PTPN11. Phosphorylation of Tyr-358 is involved in binding to PTPN6. LCK phosphorylates Tyr-340 efficiently and Tyr-358 to a lesser extent. As to expression, monocytic/myeloid lineage cells. In the brain, CD33 is mainly expressed on microglial cells.

The protein localises to the cell membrane. The protein resides in the peroxisome. Sialic-acid-binding immunoglobulin-like lectin (Siglec) that plays a role in mediating cell-cell interactions and in maintaining immune cells in a resting state. Preferentially recognizes and binds alpha-2,3- and more avidly alpha-2,6-linked sialic acid-bearing glycans. Upon engagement of ligands such as C1q or syalylated glycoproteins, two immunoreceptor tyrosine-based inhibitory motifs (ITIMs) located in CD33 cytoplasmic tail are phosphorylated by Src-like kinases such as LCK. These phosphorylations provide docking sites for the recruitment and activation of protein-tyrosine phosphatases PTPN6/SHP-1 and PTPN11/SHP-2. In turn, these phosphatases regulate downstream pathways through dephosphorylation of signaling molecules. One of the repressive effect of CD33 on monocyte activation requires phosphoinositide 3-kinase/PI3K. The sequence is that of Myeloid cell surface antigen CD33 (CD33) from Homo sapiens (Human).